The following is a 208-amino-acid chain: MADGDIEIKAGFVDTDLDDRKLTMIDDLNNPLAIVERVYLIWWHWADFHLHVISPHIDTITPAIVIEPELIPGSNDHEFVYSIHDSGSKLSTSKSQDMFSAGMSMCKLFYTIEKMVYILVERLKSGGVSMEAEVQIAFAGHEIAQRKAFESIINLPYNVVVTNFDPGIWGEKYLQNVKRLADKGYGYPPESPRKIYMHPVSSGTTARK.

The T4BSS is a complex nanomachine composed of several subcomplexes. This subunit is part of the Type IV Coupling Complex (T4CC), a subcomplex composed of the DotLMNYZ core and the IcmSW-LvgA adapter subunits, linked by the C-terminal tail of DotL. Interacts with DotL, IcmS and IcmW. Interacts with various effector proteins, including VpdB, SetA, PieA and SidH.

The protein resides in the cytoplasm. Its function is as follows. Component of the Dot/Icm type IVB secretion system (T4BSS), which is used to inject bacterial effector proteins into eukaryotic host cells. Part of a subcomplex which recruits effector proteins and delivers them to the core transmembrane subcomplex. Is a critical subunit for binding a subset of effector proteins. Recognizes more than one type of binding motif. May be a critical factor that confers host specificity. This Legionella pneumophila subsp. pneumophila (strain Philadelphia 1 / ATCC 33152 / DSM 7513) protein is Type 4 adapter protein LvgA.